The primary structure comprises 247 residues: Cell division protein ZapD (247 aa).

The protein belongs to the ZapD family. As to quaternary structure, interacts with FtsZ.

It is found in the cytoplasm. Its function is as follows. Cell division factor that enhances FtsZ-ring assembly. Directly interacts with FtsZ and promotes bundling of FtsZ protofilaments, with a reduction in FtsZ GTPase activity. This Salmonella choleraesuis (strain SC-B67) protein is Cell division protein ZapD.